The following is a 343-amino-acid chain: Phospholipid phosphatase-related protein type 2 (343 aa).

The next 3 helical transmembrane spans lie at 12-32 (FSII…VVLL), 72-92 (ALIY…GELA), and 129-149 (FLGV…AGQV). Asn-165 carries an N-linked (GlcNAc...) asparagine glycan. 3 consecutive transmembrane segments (helical) span residues 210 to 230 (AALC…VFRV), 239 to 259 (SLCL…VAEY), and 266 to 286 (VLAG…CVVH). A disordered region spans residues 291–343 (RPHSGRRLSPWEDLSQAPTMDSPLEKNPRPAGRIRHRHGSPHPSRRTVPAVAT). A phosphoserine mark is found at Ser-299 and Ser-312. The segment covering 322–335 (GRIRHRHGSPHPSR) has biased composition (basic residues).

The protein belongs to the PA-phosphatase related phosphoesterase family.

The protein localises to the membrane. In Mus musculus (Mouse), this protein is Phospholipid phosphatase-related protein type 2.